Reading from the N-terminus, the 352-residue chain is NADP-dependent oxidoreductase RED1 (352 aa).

Residues 166-169 (GAVG), lysine 192, tyrosine 208, asparagine 231, and 285-287 (FIV) each bind NADP(+).

It belongs to the NADP-dependent oxidoreductase L4BD family.

Its pathway is mycotoxin biosynthesis. Functionally, NADP-dependent oxidoreductase; part of the Tox1B locus, one of the 2 loci that mediate the biosynthesis of T-toxin, a family of linear polyketides 37 to 45 carbons in length, of which the major component is 41 carbons, and which leads to high virulence to maize. One of the PKSs (PKS1 or PKS2) could synthesize a precursor, used subsequently by the other PKS as starter unit, to add additional carbons. Variability in the length of the final carbon backbone C35-47 could be achieved by varying the number of condensation cycles, or use of different starter or extender units or might be due to decarboxylation of the penultimate product, catalyzed by DEC1. Additional proteins are required for the biosynthesis of T-toxin, including oxidoreductases RED1, RED2, RED3, LAM1 and OXI1, as well as esterase TOX9. The protein is NADP-dependent oxidoreductase RED1 of Cochliobolus heterostrophus (strain C4 / ATCC 48331 / race T) (Southern corn leaf blight fungus).